Reading from the N-terminus, the 192-residue chain is Ribose 1,5-bisphosphate phosphokinase PhnN (192 aa).

Belongs to the ribose 1,5-bisphosphokinase family.

The enzyme catalyses alpha-D-ribose 1,5-bisphosphate + ATP = 5-phospho-alpha-D-ribose 1-diphosphate + ADP. Its pathway is metabolic intermediate biosynthesis; 5-phospho-alpha-D-ribose 1-diphosphate biosynthesis; 5-phospho-alpha-D-ribose 1-diphosphate from D-ribose 5-phosphate (route II): step 3/3. Catalyzes the phosphorylation of ribose 1,5-bisphosphate to 5-phospho-D-ribosyl alpha-1-diphosphate (PRPP). The sequence is that of Ribose 1,5-bisphosphate phosphokinase PhnN from Achromobacter xylosoxidans (strain A8).